The following is a 291-amino-acid chain: 4-hydroxy-tetrahydrodipicolinate synthase (291 aa).

Residue Thr-44 coordinates pyruvate. Residue Tyr-132 is the Proton donor/acceptor of the active site. Lys-160 functions as the Schiff-base intermediate with substrate in the catalytic mechanism. Ile-202 lines the pyruvate pocket.

This sequence belongs to the DapA family. Homotetramer; dimer of dimers.

The protein localises to the cytoplasm. The enzyme catalyses L-aspartate 4-semialdehyde + pyruvate = (2S,4S)-4-hydroxy-2,3,4,5-tetrahydrodipicolinate + H2O + H(+). The protein operates within amino-acid biosynthesis; L-lysine biosynthesis via DAP pathway; (S)-tetrahydrodipicolinate from L-aspartate: step 3/4. Catalyzes the condensation of (S)-aspartate-beta-semialdehyde [(S)-ASA] and pyruvate to 4-hydroxy-tetrahydrodipicolinate (HTPA). The chain is 4-hydroxy-tetrahydrodipicolinate synthase from Rhizorhabdus wittichii (strain DSM 6014 / CCUG 31198 / JCM 15750 / NBRC 105917 / EY 4224 / RW1) (Sphingomonas wittichii).